We begin with the raw amino-acid sequence, 472 residues long: Argininosuccinate lyase (472 aa).

Belongs to the lyase 1 family. Argininosuccinate lyase subfamily.

The protein resides in the cytoplasm. It catalyses the reaction 2-(N(omega)-L-arginino)succinate = fumarate + L-arginine. The protein operates within amino-acid biosynthesis; L-arginine biosynthesis; L-arginine from L-ornithine and carbamoyl phosphate: step 3/3. This chain is Argininosuccinate lyase, found in Synechococcus sp. (strain CC9605).